Reading from the N-terminus, the 272-residue chain is Interleukin-2 receptor subunit alpha (272 aa).

Residues 1-21 form the signal peptide; that stretch reads MDPYLLMWGLLTFITVPGCQA. Residues 22 to 84 form the Sushi 1 domain; that stretch reads ELCDDDPPKI…SWDNQCQCTS (63 aa). At 22 to 240 the chain is on the extracellular side; sequence ELCDDDPPKI…ETFIFTTEYQ (219 aa). 3 disulfides stabilise this stretch: Cys24–Cys67, Cys49–Cys80, and Cys51–Cys82. N-linked (GlcNAc...) asparagine glycosylation is found at Asn70 and Asn89. The span at 87–98 shows a compositional bias: polar residues; it reads ARNTTKQVTPQP. The segment at 87 to 109 is disordered; that stretch reads ARNTTKQVTPQPEEQKERKTTEM. The Sushi 2 domain occupies 123 to 186; that stretch reads GHCREPPPWE…WTQPQLICTG (64 aa). Disulfide bonds link Cys125/Cys168 and Cys152/Cys184. The disordered stretch occupies residues 186 to 213; sequence GETEPSQFPGEEEPQASPDGLPESETSR. Residues 241–259 form a helical membrane-spanning segment; sequence VAVAGCVFLLISVLLLSGL. The Cytoplasmic segment spans residues 260 to 272; that stretch reads TWQRRQRKNRRTI.

In terms of assembly, non-covalent dimer of an alpha and a beta subunit. IL2R exists in 3 different forms: a high affinity dimer, an intermediate affinity monomer (beta subunit), and a low affinity monomer (alpha subunit). The high and intermediate affinity forms also associate with a gamma subunit.

The protein resides in the membrane. Receptor for interleukin-2. The receptor is involved in the regulation of immune tolerance by controlling regulatory T cells (TREGs) activity. TREGs suppress the activation and expansion of autoreactive T-cells. In Macaca mulatta (Rhesus macaque), this protein is Interleukin-2 receptor subunit alpha (IL2RA).